The following is a 635-amino-acid chain: Protein NSP-INTERACTING KINASE 2 (635 aa).

An N-terminal signal peptide occupies residues 1–32; sequence MLQGRREAKKSYALFSSTFFFFFICFLSSSSA. Residues 33 to 248 lie on the Extracellular side of the membrane; sequence ELTDKGVNFE…DGGTKNRKIA (216 aa). Asn92 and Asn103 each carry an N-linked (GlcNAc...) asparagine glycan. LRR repeat units lie at residues 104-128, 129-153, 155-176, and 177-200; these read LTNL…IGKL, MKLK…SYSK, LQYL…LANM, and TQLT…LAKT. N-linked (GlcNAc...) asparagine glycans are attached at residues Asn140, Asn162, Asn175, Asn188, Asn219, Asn231, and Asn235. The segment at 214-242 is disordered; that stretch reads TEKDCNGTQPKPMSITLNSSQNKSSDGGT. Positions 219-241 are enriched in polar residues; that stretch reads NGTQPKPMSITLNSSQNKSSDGG. A helical transmembrane segment spans residues 249 to 269; the sequence is VVFGVSLTCVCLLIIGFGFLL. Residues 270–635 are Cytoplasmic-facing; that stretch reads WWRRRHNKQV…VQAMELSGPR (366 aa). At Thr309 the chain carries Phosphothreonine. The region spanning 312–591 is the Protein kinase domain; sequence FSSKNLVGKG…EGDGLVEKWE (280 aa). Residues 318–326 and Lys340 each bind ATP; that span reads VGKGGFGNV. Residues Ser393 and Ser396 each carry the phosphoserine modification. At Thr408 the chain carries Phosphothreonine. Residues 422–502 are interaction with geminivirus NSP protein; it reads YLHEQCDPKI…DVFGFGILLL (81 aa). The Proton acceptor role is filled by Asp435. Phosphothreonine occurs at positions 468, 469, and 474. Tyr482 carries the post-translational modification Phosphotyrosine. Ser484 carries the post-translational modification Phosphoserine. A Phosphothreonine modification is found at Thr485. Ser489 bears the Phosphoserine mark. Residue Thr564 is modified to Phosphothreonine. The segment covering 593 to 613 has biased composition (polar residues); sequence SSQRAETNRSYSKPNEFSSSE. Positions 593 to 621 are disordered; sequence SSQRAETNRSYSKPNEFSSSERYSDLTDD.

Belongs to the protein kinase superfamily. Ser/Thr protein kinase family. Oligomer. Interacts with geminivirus nuclear shuttle protein (NSP). In terms of processing, autophosphorylated. Expressed in flowers and roots.

It is found in the cell membrane. The catalysed reaction is L-seryl-[protein] + ATP = O-phospho-L-seryl-[protein] + ADP + H(+). The enzyme catalyses L-threonyl-[protein] + ATP = O-phospho-L-threonyl-[protein] + ADP + H(+). Its activity is regulated as follows. Inhibited by the viral nuclear shuttle protein (NSP) that binds to the region required for oligomerization. In terms of biological role, involved in defense response to geminivirus infection. Phosphorylates RPL10A in vitro. The polypeptide is Protein NSP-INTERACTING KINASE 2 (NIK2) (Arabidopsis thaliana (Mouse-ear cress)).